Reading from the N-terminus, the 206-residue chain is Ribosome maturation factor RimP (206 aa).

The disordered stretch occupies residues 164-206; that stretch reads GGIPEGRAVPSDAVDLTDDSGVDSVEDDEAELEDVENEEGFDK. Over residues 178–206 the composition is skewed to acidic residues; the sequence is DLTDDSGVDSVEDDEAELEDVENEEGFDK.

Belongs to the RimP family.

Its subcellular location is the cytoplasm. Its function is as follows. Required for maturation of 30S ribosomal subunits. This chain is Ribosome maturation factor RimP, found in Rhodococcus erythropolis (strain PR4 / NBRC 100887).